The sequence spans 655 residues: Kelch-like protein 13 (655 aa).

A BTB domain is found at 92–161 (CDVTLMPGDT…IYTAKLSLNM (70 aa)). Residues 196-297 (CVEVGRIANT…TPQELINYVQ (102 aa)) form the BACK domain. Kelch repeat units lie at residues 341 to 389 (HLVT…VIGN), 390 to 441 (FLYV…ALKG), 442 to 488 (YLYA…VYGG), 490 to 535 (MYIS…TVGE), 537 to 587 (LYVI…VFEN), and 588 to 636 (KIYV…TLTV).

As to quaternary structure, component of the BCR(KLHL9-KLHL13) E3 ubiquitin ligase complex, at least composed of CUL3, KLHL9, KLHL13 and RBX1. Interacts with AURKB.

Its pathway is protein modification; protein ubiquitination. Substrate-specific adapter of a BCR (BTB-CUL3-RBX1) E3 ubiquitin-protein ligase complex required for mitotic progression and cytokinesis. The BCR(KLHL9-KLHL13) E3 ubiquitin ligase complex mediates the ubiquitination of AURKB and controls the dynamic behavior of AURKB on mitotic chromosomes and thereby coordinates faithful mitotic progression and completion of cytokinesis. The chain is Kelch-like protein 13 (KLHL13) from Homo sapiens (Human).